The primary structure comprises 560 residues: Probable methionine--tRNA ligase, cytoplasmic (560 aa).

The short motif at 16–26 (PYVNNQPHLGN) is the 'HIGH' region element. A 'KMSKS' region motif is present at residues 347–351 (KFSKS). Lys350 is an ATP binding site.

Belongs to the class-I aminoacyl-tRNA synthetase family.

The protein localises to the cytoplasm. It carries out the reaction tRNA(Met) + L-methionine + ATP = L-methionyl-tRNA(Met) + AMP + diphosphate. The sequence is that of Probable methionine--tRNA ligase, cytoplasmic from Vairimorpha ceranae (strain BRL01) (Microsporidian parasite).